Consider the following 512-residue polypeptide: SNF1-related protein kinase catalytic subunit alpha KIN11 (512 aa).

One can recognise a Protein kinase domain in the interval 20 to 272 (YKLGKTLGIG…IPEIRQHRWF (253 aa)). Residues 26–34 (LGIGSFGKV) and K49 contribute to the ATP site. Residue D143 is the Proton acceptor of the active site. Position 165 is a phosphoserine (S165). At T176 the chain carries Phosphothreonine; by GRIK1 or GRIK2. Residues 291–391 (AKKINEEIVQ…GARSQVPVDR (101 aa)) are auto-inhibitory domain (AID). The 41-residue stretch at 293–333 (KINEEIVQEVVNMGFDRNQVLESLRNRTQNDATVTYYLLLD) folds into the UBA domain. The interval 295-512 (NEEIVQEVVN…AAFLTELRVI (218 aa)) is regulatory domain (RD). The segment at 392–512 (KWALGLQSHA…AAFLTELRVI (121 aa)) is PPI. Residues 399–512 (SHAHPREIMN…AAFLTELRVI (114 aa)) form an interaction with PAD1 and SKP1 region. A KA1 domain is found at 463 to 511 (AMTSPTVIKFELQLYKAREEKYLLDIQRVNGPQFLFLDLCAAFLTELRV).

This sequence belongs to the protein kinase superfamily. CAMK Ser/Thr protein kinase family. SNF1 subfamily. Subunit of a probable heterotrimeric complex consisting of an alpha catalytic (KIN10 or KIN11) subunit, and a beta (KINB) and a gamma (KING or SNF4) non-catalytic regulatory subunits. Interacts with KINB2, KINB3, SNF4 and probably with KINB1 and KING1. Interacts with SKP1/ASK1, PAD1 and the N-terminus of PRL1. Potential subunit of a SCF ubiquitin ligase complex consisting of a SNF1-related protein kinase, SKP1 and CUL1. The association of the SCF complex with the proteasome may be mediated by PAD1 and seems to be inhibited by the interaction with PRL1. Interacts with DSP4. Interacts with the begomovirus AL2 protein and the curtovirus L2 protein. Interacts with ATAF1. Interacts with CIPK14. Interacts with FLZ proteins through their FLZ-type zinc finger domains. Interacts with GEBP/STKR1. Interacts with REM4.1 and REM4.2. Interacts with ADK2. Interacts with IDD8. Interacts with FLZ3, FLZ9, TCP3, TCP13, HB21/ZHD3 and HB23/ZHD10. Interacts with WRI1. Interacts with IPK2b. Interacts with FLZ6 and FLZ10. Post-translationally, sumoylated by SIZ1. Phosphorylated at Thr-176 under submergence. Autophosphorylated. Phosphorylated at Thr-176 by GRIK1/SNAK2 and GRIK2/SNAK1. As to expression, expressed in roots, shoots, flower buds, flowers, siliques and leaves. Restrictly expressed to the base of the leaf, the vascular tissue, and the hydathodes.

Its subcellular location is the plastid. It localises to the chloroplast. It is found in the cytoplasm. The protein localises to the endoplasmic reticulum. It carries out the reaction L-seryl-[protein] + ATP = O-phospho-L-seryl-[protein] + ADP + H(+). It catalyses the reaction L-threonyl-[protein] + ATP = O-phospho-L-threonyl-[protein] + ADP + H(+). Inactivated by the begomovirus AL2 protein or the curtovirus L2 protein. Activated by phosphorylation at Thr-176 by GRIK1/SNAK2 and GRIK2/SNAK1. Inhibited by trehalose-6-phosphate. Its function is as follows. Catalytic subunit of the probable trimeric SNF1-related protein kinase (SnRK) complex, a central regulator of cellular energy homeostasis, which, in response to seemingly unrelated darkness, sugar and stress conditions, activates energy-producing pathways and inhibits energy-consuming processes. May play a role in a signal transduction cascade regulating gene expression and carbohydrate metabolism in higher plants. The SnRK complex may also be involved in the regulation of fatty acid synthesis by phosphorylation of acetyl-CoA carboxylase and in assimilation of nitrogen by phosphorylating nitrate reductase. In vitro, KIN11 exhibits kinase activity on sucrose phosphate synthase and the kinase activity is inhibited by PRL1. May be a subunit of a SCF ubiquitin ligase complex and thus be involved in proteasomal ubiquitination. Involved in innate antiviral defenses. Phosphorylates REM4.1 in vitro. Phosphorylates ADK2 in vitro. The polypeptide is SNF1-related protein kinase catalytic subunit alpha KIN11 (Arabidopsis thaliana (Mouse-ear cress)).